We begin with the raw amino-acid sequence, 540 residues long: Chaperonin GroEL (540 aa).

Residues 30–33 (TLGP), Lys-51, 87–91 (DGTTT), Gly-415, and Asp-495 contribute to the ATP site.

Belongs to the chaperonin (HSP60) family. Forms a cylinder of 14 subunits composed of two heptameric rings stacked back-to-back. Interacts with the co-chaperonin GroES.

It is found in the cytoplasm. It catalyses the reaction ATP + H2O + a folded polypeptide = ADP + phosphate + an unfolded polypeptide.. Together with its co-chaperonin GroES, plays an essential role in assisting protein folding. The GroEL-GroES system forms a nano-cage that allows encapsulation of the non-native substrate proteins and provides a physical environment optimized to promote and accelerate protein folding. This is Chaperonin GroEL from Serratia marcescens.